A 65-amino-acid chain; its full sequence is Hainantoxin-X-3 (65 aa).

The signal sequence occupies residues 1-20 (MNMKILVLVAVLCLVVSTHA). Positions 21–37 (ERHSKTDMEDSPMIQER) are excised as a propeptide. Disulfide bonds link Cys46–Cys59 and Cys55–Cys64.

It belongs to the neurotoxin 36 family. 02 subfamily. As to expression, expressed by the venom gland.

The protein localises to the secreted. Reversibly blocks N-type calcium channels (Cav2.2/CACNA1B) in rat dorsal root ganglion cells. Elicits no toxic symptoms in either vertebrates or invertebrates during a period of 48 hours post-injection, when it was assayed in vivo by direct injection into mice and cockroaches. In Cyriopagopus hainanus (Chinese bird spider), this protein is Hainantoxin-X-3.